A 53-amino-acid polypeptide reads, in one-letter code: Small ribosomal subunit protein uS14m (53 aa).

This sequence belongs to the universal ribosomal protein uS14 family.

It localises to the mitochondrion. The sequence is that of Small ribosomal subunit protein uS14m (RPS14) from Bigelowiella natans (Pedinomonas minutissima).